The chain runs to 130 residues: Phosphomevalonate dehydratase small subunit (130 aa).

Residue Ser-62 is the Proton acceptor of the active site.

It belongs to the AcnX type II small subunit family. As to quaternary structure, heterodimer composed of a large subunit (PMDh-L) and a small subunit (PMDh-S).

The enzyme catalyses (R)-5-phosphomevalonate = (2E)-3-methyl-5-phosphooxypent-2-enoate + H2O. It functions in the pathway isoprenoid biosynthesis; isopentenyl diphosphate biosynthesis via mevalonate pathway. Component of a hydro-lyase that catalyzes the dehydration of mevalonate 5-phosphate (MVA5P) to form trans-anhydromevalonate 5-phosphate (tAHMP). Involved in the archaeal mevalonate (MVA) pathway, which provides fundamental precursors for isoprenoid biosynthesis, such as isopentenyl diphosphate (IPP) and dimethylallyl diphosphate (DMAPP). The chain is Phosphomevalonate dehydratase small subunit from Thermococcus onnurineus (strain NA1).